The primary structure comprises 168 residues: N-alpha-acetyltransferase (168 aa).

Residues 13-168 (YQIRLATLSD…EDAYLMAAPL (156 aa)) form the N-acetyltransferase domain. Tyr38 contributes to the substrate binding site. His89 serves as a coordination point for Zn(2+). Acetyl-CoA-binding positions include 93-95 (IAV) and 101-106 (KIGVGT). CoA contacts are provided by residues 93–95 (IAV) and 101–106 (KIGVGT). Glu128 serves as a coordination point for Zn(2+). Residues Asn133 and 140-142 (YKK) each bind acetyl-CoA. Asn133 is a CoA binding site. Residue Tyr155 participates in substrate binding.

It belongs to the acetyltransferase family. ARD1 subfamily. As to quaternary structure, homodimer.

It localises to the cytoplasm. The enzyme catalyses N-terminal L-alanyl-[protein] + acetyl-CoA = N-terminal N(alpha)-acetyl-L-alanyl-[protein] + CoA + H(+). The catalysed reaction is N-terminal L-seryl-[protein] + acetyl-CoA = N-terminal N(alpha)-acetyl-L-seryl-[protein] + CoA + H(+). It carries out the reaction N-terminal L-methionyl-L-leucyl-[protein] + acetyl-CoA = N-terminal N(alpha)-acetyl-L-methionyl-L-leucyl-[protein] + CoA + H(+). It catalyses the reaction N-terminal L-methionyl-L-glutamyl-[protein] + acetyl-CoA = N-terminal N(alpha)-acetyl-L-methionyl-L-glutamyl-[protein] + CoA + H(+). Displays alpha (N-terminal) acetyltransferase activity. Catalyzes the covalent attachment of an acetyl moiety from acetyl-CoA to the free alpha-amino group at the N-terminus of a protein. The chain is N-alpha-acetyltransferase from Sulfolobus acidocaldarius (strain ATCC 33909 / DSM 639 / JCM 8929 / NBRC 15157 / NCIMB 11770).